Here is a 239-residue protein sequence, read N- to C-terminus: tRNA (guanine-N(1)-)-methyltransferase (239 aa).

Residues Gly-113 and Ile-133–Leu-138 contribute to the S-adenosyl-L-methionine site. Positions Glu-218 to Gly-239 are disordered.

This sequence belongs to the RNA methyltransferase TrmD family. Homodimer.

Its subcellular location is the cytoplasm. The catalysed reaction is guanosine(37) in tRNA + S-adenosyl-L-methionine = N(1)-methylguanosine(37) in tRNA + S-adenosyl-L-homocysteine + H(+). In terms of biological role, specifically methylates guanosine-37 in various tRNAs. The sequence is that of tRNA (guanine-N(1)-)-methyltransferase from Nitrobacter winogradskyi (strain ATCC 25391 / DSM 10237 / CIP 104748 / NCIMB 11846 / Nb-255).